An 808-amino-acid chain; its full sequence is Beta-catenin/armadillo-related protein 1 (808 aa).

Positions 1–85 (MDLDPNLVIN…SSHLSGMSSM (85 aa)) are involved in transcriptional activation. ARM repeat units follow at residues 118–160 (RAIP…NETK), 165–209 (CVIF…RAIS), and 369–408 (SDVP…NLVA). Positions 541–808 (NVQDVIEGVR…DQYPYRQGRF (268 aa)) are involved in transcriptional activation. The interval 702-808 (TYEGAGEQWS…DQYPYRQGRF (107 aa)) is disordered. Over residues 723–736 (YCNSSGRDSSKTYN) the composition is skewed to polar residues. Positions 737-750 (SPMYHSPPSMYPEY) are enriched in low complexity. Residues 786–798 (NIPSNQGPSSHLS) are compositionally biased toward polar residues.

Belongs to the beta-catenin family. As to quaternary structure, interacts with apr-1, axl-1, daf-16, lin-23, and pop-1 (via acidic region in N-terminus 1-44). Interacts (via ARM repeats) with pry-1.

It is found in the cytoplasm. The protein resides in the nucleus. The protein localises to the membrane. It localises to the cell junction. In terms of biological role, participates in the Wnt signaling pathway which affects cell fate and may regulate the stem cell divisions of seam cells during larval development. Functions as a transcriptional activator but is dependent on the interaction with pop-1. Involved in maintaining lin-39 Hox expression and regulating glr-1 abundance at the synapses. Required for mab-5 expression during Q neuroblast migration and for oxidative stress-induced daf-16 signaling. Has roles in egg laying, vulva precursor cell fate determination, Q neuroblast migration, posterior ectodermal cell P12 specification, movement, body length, male tail development and dauer induction. Functionally redundant to wrm-1 and hmp-2. The polypeptide is Beta-catenin/armadillo-related protein 1 (bar-1) (Caenorhabditis briggsae).